The following is a 580-amino-acid chain: Zinc finger protein 271 (580 aa).

18 C2H2-type zinc fingers span residues 78–100, 104–126, 132–154, 160–182, 188–210, 216–238, 244–266, 272–294, 300–322, 328–350, 356–378, 384–406, 412–434, 440–462, 468–490, 496–518, 524–545, and 551–573; these read YNCD…QRTH, YECE…QRIH, YPCS…QRVH, YKCD…QRIH, YQCS…LRIH, YMCN…QRIH, YPCA…RRIH, YKCS…QRIH, YPCN…QRIH, YPCS…YRIH, YECD…QRIH, YPCN…QRVH, YTCN…QRVH, YHCS…HRVH, YACT…QRIH, YKCM…QRIH, and YPCA…QRVH.

It belongs to the krueppel C2H2-type zinc-finger protein family. Selectively expressed in adult testis.

It is found in the nucleus. Functionally, may act to control gene activity during the pachytene stage of meiotic prophase. May function as a transcription activator. The polypeptide is Zinc finger protein 271 (Znf271) (Mus musculus (Mouse)).